The sequence spans 113 residues: Large ribosomal subunit protein eL34 (113 aa).

It belongs to the eukaryotic ribosomal protein eL34 family.

The sequence is that of Large ribosomal subunit protein eL34 from Methanopyrus kandleri (strain AV19 / DSM 6324 / JCM 9639 / NBRC 100938).